The sequence spans 290 residues: Small ribosomal subunit biogenesis GTPase RsgA (290 aa).

The region spanning 62-219 (DNYLIRPQVA…VVDTPGFSTL (158 aa)) is the CP-type G domain. Residues 111 to 114 (NKID) and 162 to 170 (GPSGVGKST) contribute to the GTP site. Zn(2+)-binding residues include Cys-243, Cys-248, His-250, and Cys-256.

It belongs to the TRAFAC class YlqF/YawG GTPase family. RsgA subfamily. Monomer. Associates with 30S ribosomal subunit, binds 16S rRNA. The cofactor is Zn(2+).

It localises to the cytoplasm. Functionally, one of several proteins that assist in the late maturation steps of the functional core of the 30S ribosomal subunit. Helps release RbfA from mature subunits. May play a role in the assembly of ribosomal proteins into the subunit. Circularly permuted GTPase that catalyzes slow GTP hydrolysis, GTPase activity is stimulated by the 30S ribosomal subunit. This Clostridium novyi (strain NT) protein is Small ribosomal subunit biogenesis GTPase RsgA.